A 147-amino-acid polypeptide reads, in one-letter code: Large ribosomal subunit protein uL16 (147 aa).

Positions 1 to 20 are disordered; it reads MLMPKKVKHRKVQRGRMKGK.

This sequence belongs to the universal ribosomal protein uL16 family. Part of the 50S ribosomal subunit.

In terms of biological role, binds 23S rRNA and is also seen to make contacts with the A and possibly P site tRNAs. The protein is Large ribosomal subunit protein uL16 of Clostridium kluyveri (strain ATCC 8527 / DSM 555 / NBRC 12016 / NCIMB 10680 / K1).